The primary structure comprises 100 residues: MAKQNMIEREKKRNKLIQKYYRKRKEIKGTLNNNLTFIEQLEIQRELQKLPKNSTPCRRRNRCWKTGRSRGFYKDFGLSRHVLREMSHNCLLPGVRKASW.

This sequence belongs to the universal ribosomal protein uS14 family. As to quaternary structure, part of the 30S ribosomal subunit.

Its subcellular location is the plastid. The protein resides in the chloroplast. In terms of biological role, binds 16S rRNA, required for the assembly of 30S particles. The sequence is that of Small ribosomal subunit protein uS14c from Gracilaria tenuistipitata var. liui (Red alga).